The primary structure comprises 242 residues: Glucosamine-6-phosphate deaminase (242 aa).

D67 acts as the Proton acceptor; for enolization step in catalysis. N136 acts as the For ring-opening step in catalysis. The active-site Proton acceptor; for ring-opening step is H138. The active-site For ring-opening step is the E143.

The protein belongs to the glucosamine/galactosamine-6-phosphate isomerase family. NagB subfamily.

The catalysed reaction is alpha-D-glucosamine 6-phosphate + H2O = beta-D-fructose 6-phosphate + NH4(+). Its pathway is amino-sugar metabolism; N-acetylneuraminate degradation; D-fructose 6-phosphate from N-acetylneuraminate: step 5/5. Functionally, catalyzes the reversible isomerization-deamination of glucosamine 6-phosphate (GlcN6P) to form fructose 6-phosphate (Fru6P) and ammonium ion. This Clostridium perfringens (strain ATCC 13124 / DSM 756 / JCM 1290 / NCIMB 6125 / NCTC 8237 / Type A) protein is Glucosamine-6-phosphate deaminase.